We begin with the raw amino-acid sequence, 207 residues long: Large ribosomal subunit protein uL4 (207 aa).

The disordered stretch occupies residues 48-78 (THKVKTRSEVRGGGRKPWRQKGTGRARQGSI). Basic residues predominate over residues 60–71 (GGRKPWRQKGTG).

The protein belongs to the universal ribosomal protein uL4 family. In terms of assembly, part of the 50S ribosomal subunit.

Functionally, one of the primary rRNA binding proteins, this protein initially binds near the 5'-end of the 23S rRNA. It is important during the early stages of 50S assembly. It makes multiple contacts with different domains of the 23S rRNA in the assembled 50S subunit and ribosome. Its function is as follows. Forms part of the polypeptide exit tunnel. This is Large ribosomal subunit protein uL4 from Bacillus pumilus (strain SAFR-032).